A 401-amino-acid chain; its full sequence is Acetate kinase (401 aa).

Asn-9 provides a ligand contact to Mg(2+). Lys-16 is a binding site for ATP. Arg-88 is a binding site for substrate. Asp-147 (proton donor/acceptor) is an active-site residue. ATP-binding positions include 207–211 (HLGNG), 282–284 (DCR), and 333–337 (GIGEN). Residue Glu-388 participates in Mg(2+) binding.

It belongs to the acetokinase family. In terms of assembly, homodimer. Mg(2+) serves as cofactor. It depends on Mn(2+) as a cofactor.

It is found in the cytoplasm. The catalysed reaction is acetate + ATP = acetyl phosphate + ADP. The protein operates within metabolic intermediate biosynthesis; acetyl-CoA biosynthesis; acetyl-CoA from acetate: step 1/2. In terms of biological role, catalyzes the formation of acetyl phosphate from acetate and ATP. Can also catalyze the reverse reaction. The sequence is that of Acetate kinase from Haemophilus influenzae (strain PittGG).